Here is a 286-residue protein sequence, read N- to C-terminus: MMMGQDEVGSDQTQIIKGKRTKRQRSSSTFVVTAATTVTSTSSSAGGSGGERAVSDEYNSAVSSPVTTDCTQEEEDMAICLIMLARGTVLPSPDLKNSRKIHQKISSENSSFYVYECKTCNRTFSSFQALGGHRASHKKPRTSTEEKTRLPLTQPKSSASEEGQNSHFKVSGSALASQASNIINKANKVHECSICGSEFTSGQALGGHMRRHRTAVTTISPVAATAEVSRNSTEEEIEINIGRSMEQQRKYLPLDLNLPAPEDDLRESKFQGIVFSATPALIDCHY.

Disordered regions lie at residues 1 to 28, 40 to 60, and 131 to 171; these read MMMG…RSSS, STSS…EYNS, and GGHR…FKVS. A C2H2-type 1 zinc finger spans residues 115 to 137; the sequence is YECKTCNRTFSSFQALGGHRASH. The segment covering 154 to 171 has biased composition (polar residues); sequence QPKSSASEEGQNSHFKVS. Residues 190 to 212 form a C2H2-type 2 zinc finger; that stretch reads HECSICGSEFTSGQALGGHMRRH.

Expressed in flowers and siliques.

The protein resides in the nucleus. In terms of biological role, probable transcription factor that may be involved in stress responses. The protein is Zinc finger protein ZAT5 (ZAT5) of Arabidopsis thaliana (Mouse-ear cress).